The sequence spans 436 residues: Glutamyl-tRNA reductase 2 (436 aa).

Substrate-binding positions include 49 to 52 (TCNR), Ser-106, 111 to 113 (EPQ), and Gln-117. The active-site Nucleophile is the Cys-50. 186–191 (GAGKMC) contributes to the NADP(+) binding site.

This sequence belongs to the glutamyl-tRNA reductase family. In terms of assembly, homodimer.

The catalysed reaction is (S)-4-amino-5-oxopentanoate + tRNA(Glu) + NADP(+) = L-glutamyl-tRNA(Glu) + NADPH + H(+). It functions in the pathway porphyrin-containing compound metabolism; protoporphyrin-IX biosynthesis; 5-aminolevulinate from L-glutamyl-tRNA(Glu): step 1/2. In terms of biological role, catalyzes the NADPH-dependent reduction of glutamyl-tRNA(Glu) to glutamate 1-semialdehyde (GSA). This is Glutamyl-tRNA reductase 2 from Koribacter versatilis (strain Ellin345).